A 382-amino-acid polypeptide reads, in one-letter code: Regulatory protein RapC (382 aa).

TPR repeat units follow at residues 102 to 138 (YYVN…VADH), 149 to 182 (AEAY…NVRI), 183 to 216 (IQCH…AQAE), 223 to 256 (GRAY…FESS), and 263 to 296 (PQAY…AKET).

This sequence belongs to the Rap family. In terms of assembly, homodimer. Interacts specifically with the C-terminal DNA-binding domain of ComA. Interacts with CSF.

The protein resides in the cytoplasm. Inhibited by the competence and sporulation stimulating factor (CSF), encoded by phrC, which prevents RapC-ComA interaction. Involved in the regulation of genetic competence development. Inhibits the activity of ComA, a transcriptional factor that regulates the development of genetic competence. Acts by binding to ComA, independently of its phosphorylation state, leading to the inhibition of ComA DNA-binding activity. Does not dephosphorylate phospho-ComA and does not affect the phosphorylation level of the ComP-ComA system. This is Regulatory protein RapC (rapC) from Bacillus subtilis (strain 168).